Consider the following 108-residue polypeptide: Circadian clock oscillator protein KaiB (108 aa).

Belongs to the KaiB family. In terms of assembly, homodimer, interacts with KaiC. The KaiABC complex composition changes during the circadian cycle to control KaiC phosphorylation. Complexes KaiC(6), KaiA(2-4):KaiC(6), KaiB(6):KaiC(6) and KaiC(6):KaiB(6):KaiA(12) are among the most important forms, many form cooperatively. Undergoes a major conformational rearrangment; in the free state forms homotetramers as a dimer of dimers. When bound to the CI domain of KaiC switches to a monomeric thioredoxin-fold (KaiB(fs)). KaiB(fs) binds CikA, leading it to dephosphorylate phospho-RpaA.

Its function is as follows. Key component of the KaiABC oscillator complex, which constitutes the main circadian regulator in cyanobacteria. Complex composition changes during the circadian cycle to control KaiC phosphorylation. KaiA stimulates KaiC autophosphorylation, while KaiB sequesters KaiA, leading to KaiC autodephosphorylation. Phospho-Ser-431 KaiC accumulation triggers binding of KaiB to form the KaiB(6):KaiC(6) complex, leading to changes in output regulators CikA and SasA. KaiB switches to a thioredoxin-like fold (KaiB(fs)) when bound to KaiC. KaiB(6):KaiC(6) formation exposes a site for KaiA binding that sequesters KaiA from KaiC, making the KaiC(6):KaiB(6):KaiA(12) complex that results in KaiC autodephosphorylation. In terms of biological role, a metamorphic protein which reversibly switches between an inactive tetrameric fold and a rare, thioredoxin-like monomeric fold (KaiB(fs)). KaiB(fs) binds phospho-KaiC, KaiA and CikA. KaiA and CikA compete for binding to KaiB(fs), and KaiB(fs) and SasA compete for binding to KaiC, thus the clock oscillator and output signal pathway are tightly coupled. In Nostoc sp. (strain PCC 7120 / SAG 25.82 / UTEX 2576), this protein is Circadian clock oscillator protein KaiB.